The chain runs to 40 residues: Natriuretic peptide PpNP-b (40 aa).

Positions 1 to 8 (SGSKTANI) are excised as a propeptide. Cysteine 12 and cysteine 28 form a disulfide bridge. The disordered stretch occupies residues 20 to 40 (IGTTSGMGCGRPRPKPTPGGS).

The protein belongs to the natriuretic peptide family. As to expression, expressed by the venom gland.

Its subcellular location is the secreted. Snake venom natriuretic peptide that targets both NPR1 and NPR2. Exhibits hypotensive and vasodepressor activities. This Pseudechis porphyriacus (Red-bellied black snake) protein is Natriuretic peptide PpNP-b.